We begin with the raw amino-acid sequence, 807 residues long: Glycerol-3-phosphate acyltransferase (807 aa).

The short motif at 305-310 (CHRSHM) is the HXXXXD motif element.

This sequence belongs to the GPAT/DAPAT family.

The protein localises to the cell inner membrane. It carries out the reaction sn-glycerol 3-phosphate + an acyl-CoA = a 1-acyl-sn-glycero-3-phosphate + CoA. Its pathway is phospholipid metabolism; CDP-diacylglycerol biosynthesis; CDP-diacylglycerol from sn-glycerol 3-phosphate: step 1/3. This is Glycerol-3-phosphate acyltransferase from Klebsiella pneumoniae subsp. pneumoniae (strain ATCC 700721 / MGH 78578).